The primary structure comprises 121 residues: Basic phospholipase A2 VRV-PL-VIIIa (121 aa).

Intrachain disulfides connect cysteine 26-cysteine 115, cysteine 28-cysteine 44, cysteine 43-cysteine 95, cysteine 49-cysteine 121, cysteine 50-cysteine 88, cysteine 57-cysteine 81, and cysteine 75-cysteine 86. The Ca(2+) site is built by tyrosine 27, glycine 29, and glycine 31. Histidine 47 is a catalytic residue. Residue aspartate 48 participates in Ca(2+) binding. Aspartate 89 is a catalytic residue.

This sequence belongs to the phospholipase A2 family. Group II subfamily. D49 sub-subfamily. In terms of assembly, monomer. It depends on Ca(2+) as a cofactor. Expressed by the venom gland.

The protein localises to the secreted. It carries out the reaction a 1,2-diacyl-sn-glycero-3-phosphocholine + H2O = a 1-acyl-sn-glycero-3-phosphocholine + a fatty acid + H(+). Its activity is regulated as follows. Oxyphenbutazone (OPB), anisic acid and atropine inhibit the enzymatic activity by binding at the substrate-binding site. P-coumaric acid, resveratrol, spermidine, corticosterone and gramine derivative inhibit the enzymatic activity by binding at the substrate-binding site. Its function is as follows. Snake venom phospholipase A2 (PLA2) that shows weak neurotoxicity and medium anticoagulant effects by binding to factor Xa (F10) and inhibiting the prothrombinase activity (IC(50) is 130 nM). It also damages vital organs such as lung, liver and kidney, displays edema-inducing activities when injected into the foot pads of mice and induces necrosis of muscle cells when injected into the thigh muscle. Has a low enzymatic activity. PLA2 catalyzes the calcium-dependent hydrolysis of the 2-acyl groups in 3-sn-phosphoglycerides. The protein is Basic phospholipase A2 VRV-PL-VIIIa of Daboia russelii (Russel's viper).